Reading from the N-terminus, the 215-residue chain is 24 kDa Ras-like protein (215 aa).

GTP is bound at residue 17-24; sequence GGGGVGKS. The Effector region motif lies at 39-47; it reads YDPTIEDSY. Residues 64-68 and 123-126 contribute to the GTP site; these read DTAGQ and NKCD. The tract at residues 179–199 is disordered; sequence QTGRPAIAAGGGGPAGSYTQD. Cysteine 212 carries the post-translational modification Cysteine methyl ester. The S-farnesyl cysteine moiety is linked to residue cysteine 212. Residues 213–215 constitute a propeptide, removed in mature form; it reads VIA.

This sequence belongs to the small GTPase superfamily. Ras family.

It localises to the cell membrane. The enzyme catalyses GTP + H2O = GDP + phosphate + H(+). Its function is as follows. Ras proteins bind GDP/GTP and possess intrinsic GTPase activity. This chain is 24 kDa Ras-like protein (CC-RAS), found in Coprinopsis cinerea (strain Okayama-7 / 130 / ATCC MYA-4618 / FGSC 9003) (Inky cap fungus).